The following is a 336-amino-acid chain: Phosphatidylglycerol--prolipoprotein diacylglyceryl transferase (336 aa).

3 consecutive transmembrane segments (helical) span residues 16-36 (IGPVTIHFYALCILLGIVLAV), 53-73 (ILDITLVAVPSGIIGARIYHI), and 93-113 (IWNGGLGIWGGVLLGALAAWA). An a 1,2-diacyl-sn-glycero-3-phospho-(1'-sn-glycerol)-binding site is contributed by Arg-141. 3 consecutive transmembrane segments (helical) span residues 190 to 210 (PTFLYEMIWNLIGAALIVFLG), 220 to 240 (GSLFAIYIMWYTVGRTWIEAL), and 253 to 273 (INVWVSMAVFVLGVVAFIVIQ).

This sequence belongs to the Lgt family.

The protein resides in the cell membrane. It carries out the reaction L-cysteinyl-[prolipoprotein] + a 1,2-diacyl-sn-glycero-3-phospho-(1'-sn-glycerol) = an S-1,2-diacyl-sn-glyceryl-L-cysteinyl-[prolipoprotein] + sn-glycerol 1-phosphate + H(+). The protein operates within protein modification; lipoprotein biosynthesis (diacylglyceryl transfer). Catalyzes the transfer of the diacylglyceryl group from phosphatidylglycerol to the sulfhydryl group of the N-terminal cysteine of a prolipoprotein, the first step in the formation of mature lipoproteins. This is Phosphatidylglycerol--prolipoprotein diacylglyceryl transferase from Bifidobacterium adolescentis (strain ATCC 15703 / DSM 20083 / NCTC 11814 / E194a).